Consider the following 109-residue polypeptide: Large ribosomal subunit protein uL22 (109 aa).

Belongs to the universal ribosomal protein uL22 family. In terms of assembly, part of the 50S ribosomal subunit.

This protein binds specifically to 23S rRNA; its binding is stimulated by other ribosomal proteins, e.g. L4, L17, and L20. It is important during the early stages of 50S assembly. It makes multiple contacts with different domains of the 23S rRNA in the assembled 50S subunit and ribosome. Functionally, the globular domain of the protein is located near the polypeptide exit tunnel on the outside of the subunit, while an extended beta-hairpin is found that lines the wall of the exit tunnel in the center of the 70S ribosome. The protein is Large ribosomal subunit protein uL22 of Ralstonia nicotianae (strain ATCC BAA-1114 / GMI1000) (Ralstonia solanacearum).